The sequence spans 494 residues: Metal cation symporter ZIP14 (494 aa).

Positions 1 to 34 are cleaved as a signal peptide; it reads MTLRRASGCRQLTLTIGLALTLGLLQWPIGDVRG. Topologically, residues 35-152 are extracellular; the sequence is QDGASPAQVL…PTEAEVWGYG (118 aa). A helical membrane pass occupies residues 153–173; that stretch reads LLCVTVISLCSLVGASVVPFM. Residues 174–181 lie on the Cytoplasmic side of the membrane; the sequence is RKTFYKRL. Residues 182–202 form a helical membrane-spanning segment; it reads LLYFIALAIGTLYSNALFQLI. Residues 203–219 lie on the Extracellular side of the membrane; it reads PEAFGFDPMEDYYVPKS. A helical membrane pass occupies residues 220-240; that stretch reads AVVFGGFYLFFFTEKILKMIL. Over 241-397 the chain is Cytoplasmic; that stretch reads KPKDTGGHGH…LLNAGMSIQQ (157 aa). Positions 248–255 match the HHHGHXHX-motif motif; that stretch reads HGHGHSHF. The XEXPHE-motif signature appears at 376–381; the sequence is EEFPHE. The helical transmembrane segment at 398-418 threads the bilayer; that stretch reads ALFFNFLSACCCYLGMGFGIL. At 419 to 426 the chain is on the extracellular side; that stretch reads AGNNFSPN. Residues 427–447 traverse the membrane as a helical segment; it reads WIFALAGGMFLYIALADMFPE. The Cytoplasmic portion of the chain corresponds to 448 to 462; the sequence is MNEVSREEEEAGGSG. A helical membrane pass occupies residues 463-483; it reads FLLTFALQNAGLLTGFAIMLV. Over 484 to 494 the chain is Extracellular; it reads LTIYSGQIQLG.

Belongs to the ZIP transporter (TC 2.A.5) family. As to quaternary structure, homotrimer.

It localises to the cell membrane. Its subcellular location is the apical cell membrane. The protein localises to the basolateral cell membrane. The protein resides in the early endosome membrane. It is found in the late endosome membrane. It localises to the lysosome membrane. The catalysed reaction is Zn(2+)(out) + 2 hydrogencarbonate(out) = Zn(2+)(in) + 2 hydrogencarbonate(in). It carries out the reaction Mn(2+)(out) + 2 hydrogencarbonate(out) = Mn(2+)(in) + 2 hydrogencarbonate(in). The enzyme catalyses Fe(2+)(out) + 2 hydrogencarbonate(out) = Fe(2+)(in) + 2 hydrogencarbonate(in). It catalyses the reaction Cd(2+)(out) + 2 hydrogencarbonate(out) = Cd(2+)(in) + 2 hydrogencarbonate(in). Functionally, broad-scope metal ion transporter with a preference for zinc uptake. Also mediates cellular uptake of nontransferrin-bound iron. Its function is as follows. Electroneutral transporter of the plasma membrane mediating the cellular uptake of the divalent metal cations zinc, manganese and iron that are important for tissue homeostasis, metabolism, development and immunity. Functions as an energy-dependent symporter, transporting through the membranes an electroneutral complex composed of a divalent metal cation and two bicarbonate anions. Beside these endogenous cellular substrates, can also import cadmium a non-essential metal which is cytotoxic and carcinogenic. The sequence is that of Metal cation symporter ZIP14 from Danio rerio (Zebrafish).